The following is a 362-amino-acid chain: 3-dehydroquinate synthase (362 aa).

Belongs to the archaeal-type DHQ synthase family.

It carries out the reaction 2-amino-2,3,7-trideoxy-D-lyxo-hept-6-ulosonate + NAD(+) + H2O = 3-dehydroquinate + NH4(+) + NADH + H(+). Functionally, catalyzes the oxidative deamination and cyclization of 2-amino-3,7-dideoxy-D-threo-hept-6-ulosonic acid (ADH) to yield 3-dehydroquinate (DHQ), which is fed into the canonical shikimic pathway of aromatic amino acid biosynthesis. The protein is 3-dehydroquinate synthase of Methanococcus aeolicus (strain ATCC BAA-1280 / DSM 17508 / OCM 812 / Nankai-3).